The chain runs to 399 residues: MSSSGQTQFRYTQTPSKVVHLRNLPWECVEEELIDLCKRFGKIVNTKSNVGANRNQAFVEFADLNQAISMVSYYASSSEPAQIRGKTVYIQYSNRHEIVNNQSPGDVPGNVLLVTFEGVESHEVSIDVIHLVFSAFGFVHKIATFEKAAGFQALVQFTDVETASAARSALDGRSIPRYLLSAHVGSCSLRMSYSAHTDLNIKFQSHRSRDYTNPYLPVNQTAMDGSMQPALGADGKKVESQSNVLLGLIENMQYAVTVDVLHTVFSAYGTVQKIAIFEKNGSTQALIQYSDIPTAAMAKEALEGHCIYDGGYCKLRLSYSRHTDLNVKAFSDKSRDYTLPDLSLLVAQKGPAVSGSAPPAGWQNPQAQSQYSGYGGSPYMYPSSDPNGASPSGQPPYYG.

The residue at position 2 (Ser-2) is an N-acetylserine. 3 RRM domains span residues 17-95 (KVVH…YSNR), 109-196 (GNVL…YSAH), and 242-322 (SNVL…YSRH). A disordered region spans residues 352–399 (AVSGSAPPAGWQNPQAQSQYSGYGGSPYMYPSSDPNGASPSGQPPYYG). Residues 365-384 (PQAQSQYSGYGGSPYMYPSS) are compositionally biased toward low complexity.

The protein localises to the nucleus. Its function is as follows. Plays a role in pre-mRNA splicing. Binds to the polypyrimidine tract of introns. May promote the binding of U2 snRNP to pre-mRNA. The protein is Polypyrimidine tract-binding protein homolog 1 (PTB) of Arabidopsis thaliana (Mouse-ear cress).